A 314-amino-acid polypeptide reads, in one-letter code: Cytosolic sulfotransferase 3 (314 aa).

71–76 (KSGTLW) is a binding site for 3'-phosphoadenylyl sulfate. The active-site Proton acceptor is the H121. 3'-phosphoadenylyl sulfate-binding positions include R143, S151, Y209, and 275 to 277 (RKG).

The protein belongs to the sulfotransferase 1 family.

Its subcellular location is the cytoplasm. Functionally, sulfotransferase that utilizes 3'-phospho-5'-adenylyl sulfate (PAPS) as sulfonate donor. The sequence is that of Cytosolic sulfotransferase 3 (SOT3) from Arabidopsis thaliana (Mouse-ear cress).